Reading from the N-terminus, the 495-residue chain is Trimethylamine methyltransferase MttB2 (495 aa).

A non-standard amino acid (pyrrolysine) is located at residue O334.

Belongs to the trimethylamine methyltransferase family. In terms of assembly, can form a complex with MttC.

It carries out the reaction Co(I)-[trimethylamine-specific corrinoid protein] + trimethylamine + H(+) = methyl-Co(III)-[trimethylamine-specific corrinoid protein] + dimethylamine. Its pathway is one-carbon metabolism; methanogenesis from trimethylamine. Functionally, catalyzes the transfer of a methyl group from trimethylamine to the corrinoid cofactor of MttC. This chain is Trimethylamine methyltransferase MttB2 (mttB2), found in Methanosarcina mazei (strain ATCC BAA-159 / DSM 3647 / Goe1 / Go1 / JCM 11833 / OCM 88) (Methanosarcina frisia).